Here is a 37-residue protein sequence, read N- to C-terminus: Photosystem I reaction center subunit VIII (37 aa).

A helical transmembrane segment spans residues 10–30; sequence IFVPLVGLVFPAIAMASLSLY.

Belongs to the PsaI family.

Its subcellular location is the plastid. The protein resides in the chloroplast thylakoid membrane. Its function is as follows. May help in the organization of the PsaL subunit. This Gossypium hirsutum (Upland cotton) protein is Photosystem I reaction center subunit VIII.